We begin with the raw amino-acid sequence, 711 residues long: DNA topoisomerase 3 (711 aa).

The region spanning 2–135 (KSLILAEKPS…IKRLWISSVT (134 aa)) is the Toprim domain. Positions 8 and 104 each coordinate Mg(2+). The region spanning 152-580 (YQNLYEAALA…EMKNFTFKVV (429 aa)) is the Topo IA-type catalytic domain. The interval 186–191 (SLGRVQ) is interaction with DNA. The active-site O-(5'-phospho-DNA)-tyrosine intermediate is the Tyr305.

Belongs to the type IA topoisomerase family. It depends on Mg(2+) as a cofactor.

The catalysed reaction is ATP-independent breakage of single-stranded DNA, followed by passage and rejoining.. Releases the supercoiling and torsional tension of DNA, which is introduced during the DNA replication and transcription, by transiently cleaving and rejoining one strand of the DNA duplex. Introduces a single-strand break via transesterification at a target site in duplex DNA. The scissile phosphodiester is attacked by the catalytic tyrosine of the enzyme, resulting in the formation of a DNA-(5'-phosphotyrosyl)-enzyme intermediate and the expulsion of a 3'-OH DNA strand. The free DNA strand then undergoes passage around the unbroken strand, thus removing DNA supercoils. Finally, in the religation step, the DNA 3'-OH attacks the covalent intermediate to expel the active-site tyrosine and restore the DNA phosphodiester backbone. In Staphylococcus epidermidis (strain ATCC 12228 / FDA PCI 1200), this protein is DNA topoisomerase 3.